Here is a 212-residue protein sequence, read N- to C-terminus: MNSQQCVIIAIAGASASGKSLIAKTIFDELRRDLGTDQIGVINEDAYYRDQSHLSMDERVLTNYDHPKALDHQLLCTHLQLLKSGEAVDIPCYSYTEHTRMAETVKMTPKKVIILEGILLLTDPKLRELMDASVFMDTPLDICFLRRLTRDVAERGRTMESVISQYKKTVRPMFLQFIEPSKQYADIIVPRGGKNRIATDILKTRIQHLLAK.

13–20 (GASASGKS) serves as a coordination point for ATP.

Belongs to the uridine kinase family.

It localises to the cytoplasm. The enzyme catalyses uridine + ATP = UMP + ADP + H(+). It catalyses the reaction cytidine + ATP = CMP + ADP + H(+). It functions in the pathway pyrimidine metabolism; CTP biosynthesis via salvage pathway; CTP from cytidine: step 1/3. It participates in pyrimidine metabolism; UMP biosynthesis via salvage pathway; UMP from uridine: step 1/1. The protein is Uridine kinase of Shewanella oneidensis (strain ATCC 700550 / JCM 31522 / CIP 106686 / LMG 19005 / NCIMB 14063 / MR-1).